Consider the following 152-residue polypeptide: Transcriptional regulator MraZ (152 aa).

2 consecutive SpoVT-AbrB domains span residues Ala-5–Glu-52 and Ala-81–Ala-124.

This sequence belongs to the MraZ family. As to quaternary structure, forms oligomers.

Its subcellular location is the cytoplasm. It localises to the nucleoid. In Shewanella woodyi (strain ATCC 51908 / MS32), this protein is Transcriptional regulator MraZ.